Reading from the N-terminus, the 202-residue chain is Small ribosomal subunit protein uS4 (202 aa).

Residues 1 to 13 (MSRYRGPRLRITR) show a composition bias toward basic residues. Residues 1–43 (MSRYRGPRLRITRRLGDLPGLTRKAAKRSHPPGQHGQARRKRS) are disordered. The region spanning 90 to 152 (NRLDNVCFRL…KGSKKLAEAN (63 aa)) is the S4 RNA-binding domain.

The protein belongs to the universal ribosomal protein uS4 family. Part of the 30S ribosomal subunit. Contacts protein S5. The interaction surface between S4 and S5 is involved in control of translational fidelity.

Functionally, one of the primary rRNA binding proteins, it binds directly to 16S rRNA where it nucleates assembly of the body of the 30S subunit. In terms of biological role, with S5 and S12 plays an important role in translational accuracy. This is Small ribosomal subunit protein uS4 from Prochlorococcus marinus (strain MIT 9303).